A 425-amino-acid polypeptide reads, in one-letter code: Serine--tRNA ligase (425 aa).

230-232 contributes to the L-serine binding site; that stretch reads TAE. An ATP-binding site is contributed by 261-263; sequence RSE. Position 284 (E284) interacts with L-serine. 348–351 contributes to the ATP binding site; the sequence is EISS. S384 serves as a coordination point for L-serine.

It belongs to the class-II aminoacyl-tRNA synthetase family. Type-1 seryl-tRNA synthetase subfamily. As to quaternary structure, homodimer. The tRNA molecule binds across the dimer.

Its subcellular location is the cytoplasm. The enzyme catalyses tRNA(Ser) + L-serine + ATP = L-seryl-tRNA(Ser) + AMP + diphosphate + H(+). It carries out the reaction tRNA(Sec) + L-serine + ATP = L-seryl-tRNA(Sec) + AMP + diphosphate + H(+). It participates in aminoacyl-tRNA biosynthesis; selenocysteinyl-tRNA(Sec) biosynthesis; L-seryl-tRNA(Sec) from L-serine and tRNA(Sec): step 1/1. Catalyzes the attachment of serine to tRNA(Ser). Is also able to aminoacylate tRNA(Sec) with serine, to form the misacylated tRNA L-seryl-tRNA(Sec), which will be further converted into selenocysteinyl-tRNA(Sec). The chain is Serine--tRNA ligase from Maridesulfovibrio salexigens (strain ATCC 14822 / DSM 2638 / NCIMB 8403 / VKM B-1763) (Desulfovibrio salexigens).